A 231-amino-acid chain; its full sequence is Lactate utilization protein C (231 aa).

This sequence belongs to the LutC/YkgG family.

Functionally, is involved in L-lactate degradation and allows cells to grow with lactate as the sole carbon source. The chain is Lactate utilization protein C from Macrococcus caseolyticus (strain JCSC5402) (Macrococcoides caseolyticum).